The sequence spans 443 residues: MLSQTNQNIFTVSRLNAEVRLLLENEMGIVWLVGEISNFSAPVSGHWYLTLKDSRAQVKCAMFRGNNRRVTFKPANGNQVLVKARLSLYEPRGDYQLIIESMQPEGDGRLQQEFEALKMKLAAEGLFAQTNKQPLPEHPKRVGVITSKTGAALYDILDVLKRRDPSLPVVVYPTMVQGEEAAIQMAQAIGRANSRDECDVLIVGRGGGSLEDLWCFNNEILARTIAASQIPIISAVGHEVDVTIADFVADIRAPTPSAAAELVSRDNSHKDQALVTHQHKLASAMRYYLAQQKQQSAQLMHRLERQHPSYQLQRQTQQLDELEMRLQRAMQRFITTRQQAVERKHHRLQLNSPVKRLAEQKSKLDRVEQKLLDAMDRKLLTMRHQLAIAAEKLDTVSPLATLKRGYSITQTEQGQVVTQAKDVKTGDVLVTRLSDGELRSTVN.

It belongs to the XseA family. Heterooligomer composed of large and small subunits.

Its subcellular location is the cytoplasm. The catalysed reaction is Exonucleolytic cleavage in either 5'- to 3'- or 3'- to 5'-direction to yield nucleoside 5'-phosphates.. Its function is as follows. Bidirectionally degrades single-stranded DNA into large acid-insoluble oligonucleotides, which are then degraded further into small acid-soluble oligonucleotides. This Vibrio campbellii (strain ATCC BAA-1116) protein is Exodeoxyribonuclease 7 large subunit.